The sequence spans 131 residues: Small ribosomal subunit protein eS17 (131 aa).

It belongs to the eukaryotic ribosomal protein eS17 family.

The polypeptide is Small ribosomal subunit protein eS17 (RpS17) (Drosophila melanogaster (Fruit fly)).